A 360-amino-acid chain; its full sequence is Phenylalanine--tRNA ligase alpha subunit (360 aa).

E264 lines the Mg(2+) pocket.

The protein belongs to the class-II aminoacyl-tRNA synthetase family. Phe-tRNA synthetase alpha subunit type 1 subfamily. In terms of assembly, tetramer of two alpha and two beta subunits. Requires Mg(2+) as cofactor.

The protein localises to the cytoplasm. The catalysed reaction is tRNA(Phe) + L-phenylalanine + ATP = L-phenylalanyl-tRNA(Phe) + AMP + diphosphate + H(+). In Streptomyces avermitilis (strain ATCC 31267 / DSM 46492 / JCM 5070 / NBRC 14893 / NCIMB 12804 / NRRL 8165 / MA-4680), this protein is Phenylalanine--tRNA ligase alpha subunit.